We begin with the raw amino-acid sequence, 136 residues long: Small ribosomal subunit protein uS8c (136 aa).

It belongs to the universal ribosomal protein uS8 family. Part of the 30S ribosomal subunit.

The protein localises to the plastid. Functionally, one of the primary rRNA binding proteins, it binds directly to 16S rRNA central domain where it helps coordinate assembly of the platform of the 30S subunit. This is Small ribosomal subunit protein uS8c (rps8) from Helicosporidium sp. subsp. Simulium jonesii (Green alga).